The chain runs to 91 residues: Succinate dehydrogenase assembly factor 1A, mitochondrial (91 aa).

Belongs to the complex I LYR family. SDHAF1 subfamily. In terms of assembly, interacts with the iron-sulfur protein subunit within the SDH catalytic dimer.

The protein resides in the mitochondrion matrix. Plays an essential role in the assembly of succinate dehydrogenase (SDH), an enzyme complex (also referred to as respiratory complex II) that is a component of both the tricarboxylic acid (TCA) cycle and the mitochondrial electron transport chain, and which couples the oxidation of succinate to fumarate with the reduction of ubiquinone (coenzyme Q) to ubiquinol. Promotes maturation of the iron-sulfur protein subunit of the SDH catalytic dimer, protecting it from the deleterious effects of oxidants. May act together with SDHAF3. This Dictyostelium discoideum (Social amoeba) protein is Succinate dehydrogenase assembly factor 1A, mitochondrial.